Consider the following 505-residue polypeptide: ATP synthase subunit alpha (505 aa).

Position 169-176 (169-176) interacts with ATP; sequence GDRQIGKT.

It belongs to the ATPase alpha/beta chains family. F-type ATPases have 2 components, CF(1) - the catalytic core - and CF(0) - the membrane proton channel. CF(1) has five subunits: alpha(3), beta(3), gamma(1), delta(1), epsilon(1). CF(0) has three main subunits: a(1), b(2) and c(9-12). The alpha and beta chains form an alternating ring which encloses part of the gamma chain. CF(1) is attached to CF(0) by a central stalk formed by the gamma and epsilon chains, while a peripheral stalk is formed by the delta and b chains.

It localises to the cell inner membrane. The enzyme catalyses ATP + H2O + 4 H(+)(in) = ADP + phosphate + 5 H(+)(out). Its function is as follows. Produces ATP from ADP in the presence of a proton gradient across the membrane. The alpha chain is a regulatory subunit. The sequence is that of ATP synthase subunit alpha from Desulfosudis oleivorans (strain DSM 6200 / JCM 39069 / Hxd3) (Desulfococcus oleovorans).